Consider the following 285-residue polypeptide: Undecaprenyl-diphosphatase (285 aa).

Transmembrane regions (helical) follow at residues 3-23, 41-61, 87-107, 109-129, 197-217, 226-246, and 260-280; these read ILLL…EFLP, GEIV…AVIW, LLIA…LIKE, LFHP…ILWV, TEFS…YSLI, GDLP…LVCI, and VFAW…WGGW.

It belongs to the UppP family.

It is found in the cell inner membrane. It catalyses the reaction di-trans,octa-cis-undecaprenyl diphosphate + H2O = di-trans,octa-cis-undecaprenyl phosphate + phosphate + H(+). Functionally, catalyzes the dephosphorylation of undecaprenyl diphosphate (UPP). Confers resistance to bacitracin. This Methylibium petroleiphilum (strain ATCC BAA-1232 / LMG 22953 / PM1) protein is Undecaprenyl-diphosphatase.